We begin with the raw amino-acid sequence, 204 residues long: MEPIRIGIGGPVGAGKTMLVEKLTRAMHKELSIAVVTNDIYTKEDAQFLLKHGVLPADRVIGVETGGCPHTAIREDASMNFPAIDELKERHPDLELIFIESGGDNLAATFSPELVDFSIYIIDVAQGEKIPRKGGQGMIKSVLFIINKIDLAPYVGASLEVMERDTLAARGDKPYIFTNLKDEIGLAEVLEWIKTNALLYGLES.

A GTP-binding site is contributed by 10 to 17; sequence GPVGAGKT.

This sequence belongs to the SIMIBI class G3E GTPase family. UreG subfamily. In terms of assembly, homodimer. UreD, UreF and UreG form a complex that acts as a GTP-hydrolysis-dependent molecular chaperone, activating the urease apoprotein by helping to assemble the nickel containing metallocenter of UreC. The UreE protein probably delivers the nickel.

It is found in the cytoplasm. Functionally, facilitates the functional incorporation of the urease nickel metallocenter. This process requires GTP hydrolysis, probably effectuated by UreG. The chain is Urease accessory protein UreG from Bacillus sp. (strain TB-90).